We begin with the raw amino-acid sequence, 142 residues long: Large ribosomal subunit protein uL13 (142 aa).

The protein belongs to the universal ribosomal protein uL13 family. In terms of assembly, part of the 50S ribosomal subunit.

This protein is one of the early assembly proteins of the 50S ribosomal subunit, although it is not seen to bind rRNA by itself. It is important during the early stages of 50S assembly. In Burkholderia cenocepacia (strain ATCC BAA-245 / DSM 16553 / LMG 16656 / NCTC 13227 / J2315 / CF5610) (Burkholderia cepacia (strain J2315)), this protein is Large ribosomal subunit protein uL13.